Consider the following 286-residue polypeptide: UDP-3-O-acyl-N-acetylglucosamine deacetylase (286 aa).

Residues His-79, His-237, and Asp-241 each coordinate Zn(2+). The Proton donor role is filled by His-264.

The protein belongs to the LpxC family. Requires Zn(2+) as cofactor.

The catalysed reaction is a UDP-3-O-[(3R)-3-hydroxyacyl]-N-acetyl-alpha-D-glucosamine + H2O = a UDP-3-O-[(3R)-3-hydroxyacyl]-alpha-D-glucosamine + acetate. Its pathway is glycolipid biosynthesis; lipid IV(A) biosynthesis; lipid IV(A) from (3R)-3-hydroxytetradecanoyl-[acyl-carrier-protein] and UDP-N-acetyl-alpha-D-glucosamine: step 2/6. In terms of biological role, catalyzes the hydrolysis of UDP-3-O-myristoyl-N-acetylglucosamine to form UDP-3-O-myristoylglucosamine and acetate, the committed step in lipid A biosynthesis. The sequence is that of UDP-3-O-acyl-N-acetylglucosamine deacetylase from Brucella melitensis biotype 2 (strain ATCC 23457).